The chain runs to 131 residues: Leptin receptor gene-related protein (131 aa).

4 helical membrane passes run Leu7 to Leu27, Val32 to Ala52, Leu69 to Ala89, and Gly100 to Phe120.

It belongs to the OB-RGRP/VPS55 family. As to quaternary structure, interacts with LEPR. Interacts with RAB13.

Its subcellular location is the golgi apparatus membrane. The protein resides in the endosome membrane. Functionally, negatively regulates leptin receptor (LEPR) cell surface expression, and thus decreases response to leptin/LEP. Negatively regulates growth hormone (GH) receptor cell surface expression in liver. May play a role in liver resistance to GH during periods of reduced nutrient availability. The polypeptide is Leptin receptor gene-related protein (LEPROT) (Bos taurus (Bovine)).